A 1023-amino-acid chain; its full sequence is Exportin-T (1023 aa).

This sequence belongs to the exportin family.

It localises to the nucleus. It is found in the cytoplasm. TRNA nucleus export receptor which facilitates tRNA translocation across the nuclear pore complex. Involved in pre-tRNA splicing, probably by affecting the interaction of pre-tRNA with splicing endonuclease. This chain is Exportin-T (los1), found in Sclerotinia sclerotiorum (strain ATCC 18683 / 1980 / Ss-1) (White mold).